The sequence spans 283 residues: Tumor necrosis factor receptor superfamily member 14 (283 aa).

A signal peptide spans 1–38 (MEPPGDWGPPPWRSTPKTDVLRLVLYLTFLGAPCYAPA). At 39–202 (LPSCKEDEYP…GAGTSSSHWV (164 aa)) the chain is on the extracellular side. Cystine bridges form between C42-C53, C54-C67, C57-C75, C78-C93, C96-C111, C99-C119, C121-C138, and C127-C135. TNFR-Cys repeat units lie at residues 42–75 (CKEDEYPVGSECCPKCSPGYRVKEACGELTGTVC), 78–119 (CPPG…NAVC), and 121–162 (CSPG…DTLC). N-linked (GlcNAc...) asparagine glycosylation is present at N110. A glycan (N-linked (GlcNAc...) asparagine) is linked at N173. The chain crosses the membrane as a helical span at residues 203-223 (WWFLSGSLVIVIVCSTVGLII). At 224–283 (CVKRRKPRGDVVKVIVSVQRKRQEAEGEATVIEALQAPPDVTTVAVEETIPSFTGRSPNH) the chain is on the cytoplasmic side. The residue at position 240 (S240) is a Phosphoserine.

This sequence belongs to the tumor necrosis factor receptor superfamily. In terms of assembly, interacts with TRAF2, TRAF3 and TRAF5. Interacts (via CRD1/TNFR-Cys 1) with CD160; this interaction is direct. Interacts with LTA and TNFSF14. Interacts (via CRD1/TNFR-Cys 1) in cis and trans with BTLA; the cis interactions inhibits the trans interactions. As to quaternary structure, (Microbial infection) Interacts with herpes simplex virus 1/HHV-1 envelope glycoprotein D. (Microbial infection) Interacts with herpes simplex virus 2/HHV-2 envelope glycoprotein D. N-glycosylated. Widely expressed, with the highest expression in lung, spleen and thymus. Expressed in a subpopulation of B cells and monocytes. Expressed in naive T cells.

It is found in the cell membrane. Receptor for four distinct ligands: The TNF superfamily members TNFSF14/LIGHT and homotrimeric LTA/lymphotoxin-alpha and the immunoglobulin superfamily members BTLA and CD160, altogether defining a complex stimulatory and inhibitory signaling network. Signals via the TRAF2-TRAF3 E3 ligase pathway to promote immune cell survival and differentiation. Participates in bidirectional cell-cell contact signaling between antigen presenting cells and lymphocytes. In response to ligation of TNFSF14/LIGHT, delivers costimulatory signals to T cells, promoting cell proliferation and effector functions. Interacts with CD160 on NK cells, enhancing IFNG production and anti-tumor immune response. In the context of bacterial infection, acts as a signaling receptor on epithelial cells for CD160 from intraepithelial lymphocytes, triggering the production of antimicrobial proteins and pro-inflammatory cytokines. Upon binding to CD160 on activated CD4+ T cells, down-regulates CD28 costimulatory signaling, restricting memory and alloantigen-specific immune response. May interact in cis (on the same cell) or in trans (on other cells) with BTLA. In cis interactions, appears to play an immune regulatory role inhibiting in trans interactions in naive T cells to maintain a resting state. In trans interactions, can predominate during adaptive immune response to provide survival signals to effector T cells. Its function is as follows. (Microbial infection) Acts as a receptor for Herpes simplex virus 1/HHV-1. In terms of biological role, (Microbial infection) Acts as a receptor for Herpes simplex virus 2/HHV-2. This Homo sapiens (Human) protein is Tumor necrosis factor receptor superfamily member 14.